The chain runs to 415 residues: T-cell-specific guanine nucleotide triphosphate-binding protein 1 (415 aa).

Positions 55–237 constitute an IRG-type G domain; that stretch reads APLHIAVTGE…PKLETKLLQD (183 aa). Positions 66, 68, 69, and 70 each coordinate GDP. A (Microbial infection) Phosphothreonine; by ROP17 modification is found at T89. Positions 90, 171, 173, and 219 each coordinate GDP.

This sequence belongs to the TRAFAC class dynamin-like GTPase superfamily. IRG family. In terms of assembly, monomer, homodimer or homotetramer in the presence of GTP. Forms higher order homooligomers in GTP-dependent manner. (Microbial infection) Interacts with Toxoplasma gondii ROP18. (Microbial infection) Phosphorylated by Toxoplasma gondii ROP17; the phosphorylation leads to disassembly of IRGB6 (TGTP1/TGTP2) polymers into monomers and dimers. Phosphorylated by Toxoplasma gondii ROP18. Expressed in thymus and lymph nodes, predominantly T-cells. Not expressed by immature CD4(+) CD8(+) thymocytes (at protein level). Expressed in IFNG-stimulated macrophages. Expressed at low levels in unstimulated astrocytes. Due to sequence similarity with Tgtp2, it is impossible to assign unambiguously experimental data published in the literature to Tgtp1 or Tgtp2 gene.

It localises to the cytoplasm. The protein localises to the endoplasmic reticulum. Its subcellular location is the golgi apparatus. The protein resides in the parasitophorous vacuole membrane. The catalysed reaction is GTP + H2O = GDP + phosphate + H(+). Involved in innate cell-autonomous resistance to intracellular pathogens, such as Toxoplasma gondii. During avirulent type II T.gondii infection, recruited to the parasitophorous vacuole (PV) membrane, leading to PV vesiculation and rupture, and subsequent digestion of the parasite within the cytosol. Not recruited to virulent type I T.gondii PV membrane. May confer an antiviral state for vesicular stomatitis virus. The protein is T-cell-specific guanine nucleotide triphosphate-binding protein 1 (Tgtp1) of Mus musculus (Mouse).